A 117-amino-acid chain; its full sequence is Large ribosomal subunit protein bL20c (117 aa).

It belongs to the bacterial ribosomal protein bL20 family.

It localises to the plastid. It is found in the chloroplast. Binds directly to 23S ribosomal RNA and is necessary for the in vitro assembly process of the 50S ribosomal subunit. It is not involved in the protein synthesizing functions of that subunit. The sequence is that of Large ribosomal subunit protein bL20c from Lobularia maritima (Sweet alyssum).